Here is a 62-residue protein sequence, read N- to C-terminus: Photosystem II reaction center protein Z (62 aa).

2 helical membrane passes run 8–28 (AVFA…VVFA) and 41–61 (FSGT…NSLI).

It belongs to the PsbZ family. In terms of assembly, PSII is composed of 1 copy each of membrane proteins PsbA, PsbB, PsbC, PsbD, PsbE, PsbF, PsbH, PsbI, PsbJ, PsbK, PsbL, PsbM, PsbT, PsbY, PsbZ, Psb30/Ycf12, at least 3 peripheral proteins of the oxygen-evolving complex and a large number of cofactors. It forms dimeric complexes.

The protein localises to the plastid. It localises to the chloroplast thylakoid membrane. In terms of biological role, may control the interaction of photosystem II (PSII) cores with the light-harvesting antenna, regulates electron flow through the 2 photosystem reaction centers. PSII is a light-driven water plastoquinone oxidoreductase, using light energy to abstract electrons from H(2)O, generating a proton gradient subsequently used for ATP formation. In Oenothera elata subsp. hookeri (Hooker's evening primrose), this protein is Photosystem II reaction center protein Z.